A 926-amino-acid polypeptide reads, in one-letter code: Isoleucine--tRNA ligase (926 aa).

A disordered region spans residues 1–21; that stretch reads MKMKETLQLGKTAFPMRGNLP. The 'HIGH' region signature appears at 57-67; sequence PYANGNIHLGH. Glutamate 552 contacts L-isoleucyl-5'-AMP. The short motif at 593–597 is the 'KMSKS' region element; it reads KMSKS. ATP is bound at residue lysine 596. Zn(2+)-binding residues include cysteine 886, cysteine 889, cysteine 906, and cysteine 909.

Belongs to the class-I aminoacyl-tRNA synthetase family. IleS type 1 subfamily. Monomer. It depends on Zn(2+) as a cofactor.

The protein localises to the cytoplasm. It catalyses the reaction tRNA(Ile) + L-isoleucine + ATP = L-isoleucyl-tRNA(Ile) + AMP + diphosphate. In terms of biological role, catalyzes the attachment of isoleucine to tRNA(Ile). As IleRS can inadvertently accommodate and process structurally similar amino acids such as valine, to avoid such errors it has two additional distinct tRNA(Ile)-dependent editing activities. One activity is designated as 'pretransfer' editing and involves the hydrolysis of activated Val-AMP. The other activity is designated 'posttransfer' editing and involves deacylation of mischarged Val-tRNA(Ile). This chain is Isoleucine--tRNA ligase, found in Enterococcus faecalis (strain ATCC 700802 / V583).